Reading from the N-terminus, the 180-residue chain is Large ribosomal subunit protein uL6 (180 aa).

The protein belongs to the universal ribosomal protein uL6 family. As to quaternary structure, part of the 50S ribosomal subunit.

In terms of biological role, this protein binds to the 23S rRNA, and is important in its secondary structure. It is located near the subunit interface in the base of the L7/L12 stalk, and near the tRNA binding site of the peptidyltransferase center. This is Large ribosomal subunit protein uL6 from Protochlamydia amoebophila (strain UWE25).